Consider the following 156-residue polypeptide: MPRRRVIGQRKILPDPKFGSELLAKFVNILMVDGKKSTAEAIVYTALETLAQRSGKDFLEAFEVALDNVRPTVEVKSRRVGGSTYQVPVEVRPVRRNALAMRWIVDAARKRGDKSMALRLANELSDAAENKGSAVKKREDVHRMAEANKAFAHYRW.

The protein belongs to the universal ribosomal protein uS7 family. As to quaternary structure, part of the 30S ribosomal subunit. Contacts proteins S9 and S11.

Its function is as follows. One of the primary rRNA binding proteins, it binds directly to 16S rRNA where it nucleates assembly of the head domain of the 30S subunit. Is located at the subunit interface close to the decoding center, probably blocks exit of the E-site tRNA. The sequence is that of Small ribosomal subunit protein uS7 from Yersinia enterocolitica serotype O:8 / biotype 1B (strain NCTC 13174 / 8081).